The primary structure comprises 397 residues: Lysophospholipid transporter LplT (397 aa).

Residues 1–17 (MSESVHTNTSLWSKGMK) are Periplasmic-facing. The helical transmembrane segment at 18-38 (AVIVAQFLSAFGDNALLFATL) threads the bilayer. Residues 39–52 (ALLKAQFYPEWSQP) lie on the Cytoplasmic side of the membrane. Residues 53–73 (ILQMVFVGAYILFAPFVGQVA) traverse the membrane as a helical segment. The Periplasmic segment spans residues 74–90 (DSFAKGRVMMFANGLKL). The chain crosses the membrane as a helical span at residues 91-111 (LGAASICFGINPFLGYTLVGV). Topologically, residues 112–144 (GAAAYSPAKYGILGELTTGSKLVKANGLMEAST) are cytoplasmic. The chain crosses the membrane as a helical span at residues 145 to 165 (IAAILLGSVAGGVLADWHVLV). A topological domain (periplasmic) is located at residue Ala-166. The chain crosses the membrane as a helical span at residues 167–187 (LAACALAYGGAVVANIYIPKL). Over 188–226 (AAARPGQSWNLINMTRSFLNACTSLWRNGETRFSLVGTS) the chain is Cytoplasmic. A helical membrane pass occupies residues 227-247 (LFWGAGVTLRFLLVLWVPVAL). Residues 248–256 (GITDNATPT) are Periplasmic-facing. Residues 257-277 (YLNAMVAIGIVVGAGAAAKLV) form a helical membrane-spanning segment. At 278–280 (TLE) the chain is on the cytoplasmic side. A helical membrane pass occupies residues 281-301 (TVSRCMPAGILIGVVVLIFSL). The Periplasmic portion of the chain corresponds to 302-304 (QHE). A helical membrane pass occupies residues 305 to 325 (QLPAYALLMLIGVLGGFFVVP). The Cytoplasmic portion of the chain corresponds to 326–343 (LNALLQERGKKSVGAGNA). A helical membrane pass occupies residues 344–364 (IAVQNLGENSAMLLMLGIYSL). At 365-366 (AV) the chain is on the periplasmic side. Residues 367–387 (MVGIPVVPIGIGFGALFALAI) traverse the membrane as a helical segment. Over 388–397 (TALWIWQRRH) the chain is Cytoplasmic.

Belongs to the major facilitator superfamily. LplT (TC 2.A.1.42) family.

The protein localises to the cell inner membrane. Its function is as follows. Catalyzes the facilitated diffusion of 2-acyl-glycero-3-phosphoethanolamine (2-acyl-GPE) into the cell. This Escherichia coli O157:H7 (strain EC4115 / EHEC) protein is Lysophospholipid transporter LplT.